Reading from the N-terminus, the 635-residue chain is 1-deoxy-D-xylulose-5-phosphate synthase (635 aa).

Thiamine diphosphate contacts are provided by residues H72 and 113–115; that span reads GHA. Residue D144 coordinates Mg(2+). Residues 145 to 146, N174, Y287, and E370 each bind thiamine diphosphate; that span reads GA. N174 contributes to the Mg(2+) binding site.

Belongs to the transketolase family. DXPS subfamily. As to quaternary structure, homodimer. The cofactor is Mg(2+). Thiamine diphosphate is required as a cofactor.

The catalysed reaction is D-glyceraldehyde 3-phosphate + pyruvate + H(+) = 1-deoxy-D-xylulose 5-phosphate + CO2. The protein operates within metabolic intermediate biosynthesis; 1-deoxy-D-xylulose 5-phosphate biosynthesis; 1-deoxy-D-xylulose 5-phosphate from D-glyceraldehyde 3-phosphate and pyruvate: step 1/1. Its function is as follows. Catalyzes the acyloin condensation reaction between C atoms 2 and 3 of pyruvate and glyceraldehyde 3-phosphate to yield 1-deoxy-D-xylulose-5-phosphate (DXP). The protein is 1-deoxy-D-xylulose-5-phosphate synthase of Trichodesmium erythraeum (strain IMS101).